The sequence spans 1503 residues: Chromosome partition protein MukB (1503 aa).

Positions 1 to 19 (MMNTNELFDQTAVNSSQDK) are enriched in polar residues. The interval 1–21 (MMNTNELFDQTAVNSSQDKPL) is disordered. 65 to 72 (GGNGAGKS) contacts ATP. Coiled coils occupy residues 370–495 (MNAL…QRLS), 536–616 (DQKM…HRQQ), 662–697 (MQEMLRKEREATLERDELARTEAALASQISQLSQAD), 865–1173 (EMLM…SAEE), and 1238–1293 (DAIE…LQNI). The segment at 696-813 (ADGAEDIRLN…EVPLFGRAAR (118 aa)) is flexible hinge.

Belongs to the SMC family. MukB subfamily. As to quaternary structure, homodimerization via its hinge domain. Binds to DNA via its C-terminal region. Interacts, and probably forms a ternary complex, with MukE and MukF via its C-terminal region. The complex formation is stimulated by calcium or magnesium. Interacts with tubulin-related protein FtsZ.

The protein resides in the cytoplasm. It is found in the nucleoid. In terms of biological role, plays a central role in chromosome condensation, segregation and cell cycle progression. Functions as a homodimer, which is essential for chromosome partition. Involved in negative DNA supercoiling in vivo, and by this means organize and compact chromosomes. May achieve or facilitate chromosome segregation by condensation DNA from both sides of a centrally located replisome during cell division. In Haemophilus ducreyi (strain 35000HP / ATCC 700724), this protein is Chromosome partition protein MukB.